Reading from the N-terminus, the 90-residue chain is Putative transcript Y 12 protein (90 aa).

The chain is Putative transcript Y 12 protein (TTTY12) from Homo sapiens (Human).